Consider the following 256-residue polypeptide: MSSGERVAKVVLVDIEGTTTSISFVHDVLFPYAKQNVEKFLRDFWKEDDIKHIVQDLQQVPKFADYKALLSAPPTEVDIELIAGFVRYLIDQDLKVTPMKTLQGLIWAQGYANGELKGHVYEDVPAAFEAWRAAGLRIAVYSSGSVAAQKLIFGHSLAGNLQPHLSAYFDTHVGHKQEQQSYENIAKQLKEDPKQILFLTDIPGEAAAACSAGLQAIILQRPGNAALADDQKASFELIPDFKPLHNLKLPINKSQA.

Mg(2+) contacts are provided by aspartate 14 and glutamate 16. Substrate-binding positions include 142-143 (SS) and lysine 176. Aspartate 201 provides a ligand contact to Mg(2+).

The protein belongs to the HAD-like hydrolase superfamily. MasA/MtnC family. In terms of assembly, monomer. Requires Mg(2+) as cofactor.

The protein resides in the cytoplasm. It localises to the nucleus. It catalyses the reaction 5-methylsulfanyl-2,3-dioxopentyl phosphate + H2O = 1,2-dihydroxy-5-(methylsulfanyl)pent-1-en-3-one + phosphate. The protein operates within amino-acid biosynthesis; L-methionine biosynthesis via salvage pathway; L-methionine from S-methyl-5-thio-alpha-D-ribose 1-phosphate: step 3/6. It functions in the pathway amino-acid biosynthesis; L-methionine biosynthesis via salvage pathway; L-methionine from S-methyl-5-thio-alpha-D-ribose 1-phosphate: step 4/6. Functionally, bifunctional enzyme that catalyzes the enolization of 2,3-diketo-5-methylthiopentyl-1-phosphate (DK-MTP-1-P) into the intermediate 2-hydroxy-3-keto-5-methylthiopentenyl-1-phosphate (HK-MTPenyl-1-P), which is then dephosphorylated to form the acireductone 1,2-dihydroxy-3-keto-5-methylthiopentene (DHK-MTPene). In Drosophila sechellia (Fruit fly), this protein is Enolase-phosphatase E1.